Reading from the N-terminus, the 339-residue chain is Polyhydroxybutyrate depolymerase (339 aa).

The first 20 residues, 1–20 (MFDSVKIAWLVALGAAQVAA), serve as a signal peptide directing secretion. The active site involves Ser-39. Cys-70 and Cys-79 are oxidised to a cystine. Asp-121 is an active-site residue. N-linked (GlcNAc...) asparagine glycosylation occurs at Asn-144. His-155 is a catalytic residue. 3 cysteine pairs are disulfide-bonded: Cys-169–Cys-180, Cys-234–Cys-241, and Cys-250–Cys-304. Residue Trp-307 participates in (3R)-hydroxybutanoate trimer binding.

It belongs to the carbohydrate esterase 1 (CE1) family.

The protein localises to the secreted. It carries out the reaction [(3R)-hydroxybutanoate](n) + H2O = [(3R)-hydroxybutanoate](n-1) + (R)-3-hydroxybutanoate + H(+). With respect to regulation, the enzyme is completely inhibited by dithiothreitol (DTT) and diisopropylfluorophosphate (DFP), and partially inhibited by HgCl(2) and by enzyme3-(p-nitrophenoxy)propane (EPNP). Activity is not affected by N-ethylmaleimide (NEM) or phenylmethylsulfonyl fluoride (PMSF). Functionally, esterase involved in the hydrolysis of polyhydroxybutyrate, a microbial polyester that can be produced from renewable resources. This chain is Polyhydroxybutyrate depolymerase, found in Talaromyces funiculosus (Fruitlet core rot fungus).